The following is a 180-amino-acid chain: Bifunctional protein PyrR (180 aa).

Positions 99-111 match the PRPP-binding motif; the sequence is VILVDDVLYTCRT.

The protein belongs to the purine/pyrimidine phosphoribosyltransferase family. PyrR subfamily. In terms of assembly, homodimer and homohexamer; in equilibrium.

It catalyses the reaction UMP + diphosphate = 5-phospho-alpha-D-ribose 1-diphosphate + uracil. Functionally, regulates transcriptional attenuation of the pyrimidine nucleotide (pyr) operon by binding in a uridine-dependent manner to specific sites on pyr mRNA. This disrupts an antiterminator hairpin in the RNA and favors formation of a downstream transcription terminator, leading to a reduced expression of downstream genes. Also displays a weak uracil phosphoribosyltransferase activity which is not physiologically significant. The polypeptide is Bifunctional protein PyrR (Clostridium botulinum (strain Alaska E43 / Type E3)).